Reading from the N-terminus, the 362-residue chain is Heat-inducible transcription repressor HrcA (362 aa).

It belongs to the HrcA family.

In terms of biological role, negative regulator of class I heat shock genes (grpE-dnaK-dnaJ and groELS operons). Prevents heat-shock induction of these operons. This Bradyrhizobium diazoefficiens (strain JCM 10833 / BCRC 13528 / IAM 13628 / NBRC 14792 / USDA 110) protein is Heat-inducible transcription repressor HrcA.